The sequence spans 40 residues: Alpha-conotoxin-like Qc1.1c (40 aa).

The propeptide occupies 1–19 (SDGRNTAANDKASNLMALR). 2 disulfides stabilise this stretch: Cys-22/Cys-28 and Cys-23/Cys-36. The tract at residues 24–26 (PNP) is lacks the Ser-Xaa-Pro motif that is crucial for potent interaction with nAChR.

The protein belongs to the conotoxin A superfamily. As to expression, expressed by the venom duct.

The protein resides in the secreted. Its function is as follows. Alpha-conotoxins act on postsynaptic membranes, they bind to the nicotinic acetylcholine receptors (nAChR) and thus inhibit them. Has possibly a distinct nAChR binding mode from other alpha-conotoxins, due to a different three residue motif (lacks the Ser-Xaa-Pro motif). In Conus quercinus (Oak cone), this protein is Alpha-conotoxin-like Qc1.1c.